We begin with the raw amino-acid sequence, 182 residues long: ATP synthase subunit delta (182 aa).

Belongs to the ATPase delta chain family. F-type ATPases have 2 components, F(1) - the catalytic core - and F(0) - the membrane proton channel. F(1) has five subunits: alpha(3), beta(3), gamma(1), delta(1), epsilon(1). CF(0) has four main subunits: a(1), b(1), b'(1) and c(10-14). The alpha and beta chains form an alternating ring which encloses part of the gamma chain. F(1) is attached to F(0) by a central stalk formed by the gamma and epsilon chains, while a peripheral stalk is formed by the delta, b and b' chains.

The protein resides in the cellular thylakoid membrane. In terms of biological role, f(1)F(0) ATP synthase produces ATP from ADP in the presence of a proton or sodium gradient. F-type ATPases consist of two structural domains, F(1) containing the extramembraneous catalytic core and F(0) containing the membrane proton channel, linked together by a central stalk and a peripheral stalk. During catalysis, ATP synthesis in the catalytic domain of F(1) is coupled via a rotary mechanism of the central stalk subunits to proton translocation. Its function is as follows. This protein is part of the stalk that links CF(0) to CF(1). It either transmits conformational changes from CF(0) to CF(1) or is implicated in proton conduction. This chain is ATP synthase subunit delta, found in Prochlorococcus marinus (strain NATL2A).